The chain runs to 224 residues: Ribosomal RNA large subunit methyltransferase E (224 aa).

Residues glycine 64, tryptophan 66, aspartate 97, aspartate 113, and aspartate 138 each coordinate S-adenosyl-L-methionine. Lysine 178 serves as the catalytic Proton acceptor.

This sequence belongs to the class I-like SAM-binding methyltransferase superfamily. RNA methyltransferase RlmE family.

It localises to the cytoplasm. The catalysed reaction is uridine(2552) in 23S rRNA + S-adenosyl-L-methionine = 2'-O-methyluridine(2552) in 23S rRNA + S-adenosyl-L-homocysteine + H(+). Functionally, specifically methylates the uridine in position 2552 of 23S rRNA at the 2'-O position of the ribose in the fully assembled 50S ribosomal subunit. The sequence is that of Ribosomal RNA large subunit methyltransferase E from Methylibium petroleiphilum (strain ATCC BAA-1232 / LMG 22953 / PM1).